The following is a 473-amino-acid chain: Glutamate--tRNA ligase (473 aa).

Residues 9-19 (PSPTGELHLGS) carry the 'HIGH' region motif. Positions 237–241 (KLSKK) match the 'KMSKS' region motif. Position 240 (Lys-240) interacts with ATP.

Belongs to the class-I aminoacyl-tRNA synthetase family. Glutamate--tRNA ligase type 1 subfamily. Monomer.

Its subcellular location is the cytoplasm. The catalysed reaction is tRNA(Glu) + L-glutamate + ATP = L-glutamyl-tRNA(Glu) + AMP + diphosphate. Its function is as follows. Catalyzes the attachment of glutamate to tRNA(Glu) in a two-step reaction: glutamate is first activated by ATP to form Glu-AMP and then transferred to the acceptor end of tRNA(Glu). This is Glutamate--tRNA ligase from Wigglesworthia glossinidia brevipalpis.